The following is a 233-amino-acid chain: Partner of Y14 and mago (233 aa).

Residues 1–153 (MTTYSTDSQG…SNNSDSTVDE (153 aa)) form a disordered region. A coiled-coil region spans residues 62 to 97 (EVVQKAKEKRERERLRQAREEQQRKEQQNKKQQAGA). A compositionally biased stretch (basic and acidic residues) spans 65 to 90 (QKAKEKRERERLRQAREEQQRKEQQN). The segment covering 122 to 142 (KQPQQHTKSSQQKSTTAAAAA) has biased composition (low complexity). Positions 167–199 (ADAQQLEVAKKLRKLRKKIREIEAIETKLRSTD) form a coiled coil.

This sequence belongs to the pym family. In terms of assembly, interacts (via N-terminus) with mago and tsu/Y14; the interaction is direct.

Its subcellular location is the cytoplasm. It is found in the nucleus. Its function is as follows. Regulator of the exon junction complex (EJC), a multiprotein complex that associates immediately upstream of the exon-exon junction on mRNAs and serves as a positional landmarks for the intron exon structure of genes and directs post-transcriptional processes in the cytoplasm such as mRNA export, nonsense-mediated mRNA decay (NMD) or translation. The polypeptide is Partner of Y14 and mago (Anopheles gambiae (African malaria mosquito)).